We begin with the raw amino-acid sequence, 153 residues long: Probable inactive ribonuclease-like protein 13 (153 aa).

Residues 1–22 (MASDAASLLVLQLVLQPTLVTG) form the signal peptide.

It belongs to the pancreatic ribonuclease family.

The protein localises to the secreted. Its function is as follows. Does not exhibit any ribonuclease activity. The chain is Probable inactive ribonuclease-like protein 13 (Rnase13) from Rattus norvegicus (Rat).